We begin with the raw amino-acid sequence, 357 residues long: N-acetyl-gamma-glutamyl-phosphate reductase (357 aa).

Cys160 is a catalytic residue.

The protein belongs to the NAGSA dehydrogenase family. Type 1 subfamily.

It is found in the cytoplasm. The catalysed reaction is N-acetyl-L-glutamate 5-semialdehyde + phosphate + NADP(+) = N-acetyl-L-glutamyl 5-phosphate + NADPH + H(+). Its pathway is amino-acid biosynthesis; L-arginine biosynthesis; N(2)-acetyl-L-ornithine from L-glutamate: step 3/4. Its function is as follows. Catalyzes the NADPH-dependent reduction of N-acetyl-5-glutamyl phosphate to yield N-acetyl-L-glutamate 5-semialdehyde. This is N-acetyl-gamma-glutamyl-phosphate reductase from Synechococcus sp. (strain CC9605).